An 89-amino-acid polypeptide reads, in one-letter code: CRISPR-associated endoribonuclease Cas2 2 (89 aa).

D9 serves as a coordination point for Mg(2+).

It belongs to the CRISPR-associated endoribonuclease Cas2 protein family. Homodimer, forms a heterotetramer with a Cas1 homodimer. Requires Mg(2+) as cofactor.

CRISPR (clustered regularly interspaced short palindromic repeat), is an adaptive immune system that provides protection against mobile genetic elements (viruses, transposable elements and conjugative plasmids). CRISPR clusters contain sequences complementary to antecedent mobile elements and target invading nucleic acids. CRISPR clusters are transcribed and processed into CRISPR RNA (crRNA). Functions as a ssRNA-specific endoribonuclease. Involved in the integration of spacer DNA into the CRISPR cassette. The protein is CRISPR-associated endoribonuclease Cas2 2 of Methanospirillum hungatei JF-1 (strain ATCC 27890 / DSM 864 / NBRC 100397 / JF-1).